An 817-amino-acid polypeptide reads, in one-letter code: MPNSSSTSQPATTGSETASTSYVNYVEMSAEQEYFLYELETTDSGSMGLVLRAIYDTGDVQSFARALQQRISHYDKNIQKVCSFHYQSFVDAMQELMKLKEQCQDIKEETVAIDAEIQQISQRLCQKKQEIVRYRKLMKNAKTAMDQIAVCLPVLENYAKLQEQMSNRKYYQALKTLEELEHTHLALVEKYRFTQVLAKSMAPVRLEIKEKAYSEFKDFLENIKKVAGRIGKHASKDTAEQHSFGVTDAERAKKIQEEARKNASNVEIEVSADGSIVKKNMSPKRNMKMQVEDDEQVSAQDLIDFTPVHRCCQIFNVLGAKEEFEQYYRQQRKEQCDLVIEPTHKMNNFKHYVEYLDEIVGFFVVEDQILMTQSNLSTTVDKDKLWDNALMKIRQHLDARFGGSPDVLMMLKMKKVILLFILTMKSYGYAVAPLYELLQNFRDQYNEILVKEYCAQFERDLEKDNYTPITVNSEEEFRTIIRKFPFYKRSMEQEPFPRRFPFSPFVTDAYTQAKNYLIGCLKFMDNLQLNTSAVDDTVRRCANVLLGRWAGVLKSFVHKRLSMIQLVQITINLGYLEKSCESLGAFITSKTSGEEAIGTTSHQVVLSEKVFRDVRSEVEQQIDECMRSKVDEIIDLANYDWELPAAAGQASEFISDLINFLQTTFTSFTNLPSGLAKHVCTQTCKHISQSMSDFLLSPETKCISTGALDQFSLDVMQCEMFTTRCPVAGVDPQTLSMTFADLRQLLDLVMSSDWTTFNAEYGKDHAKYLRVKASTAIVVLEKMIEFERKSTGFFGIAKGDRKKLLDTIVRQLKLLEI.

2 coiled-coil regions span residues 87–149 and 247–270; these read QSFV…DQIA and TDAE…EIEV.

The protein belongs to the SEC15 family. The exocyst complex is composed of sec-3/exoc1, sec-5/exoc2, sec-6/exoc3, sec-8/exoc4, sec-10/exoc5, sec-15/exoc6, exo-70/exoc7 and exo-84/exoc8.

Its function is as follows. Component of the exocyst complex involved in the docking of exocytic vesicles with fusion sites on the plasma membrane. This is Exocyst complex component 6 (sec-15) from Caenorhabditis elegans.